A 286-amino-acid polypeptide reads, in one-letter code: Alpha-ketoglutarate-dependent dioxygenase alkB homolog 3 (286 aa).

The segment at Gln21–Lys45 is disordered. Residues Ala22–Lys31 are compositionally biased toward polar residues. Residues Trp115 and Tyr141–Tyr143 each bind substrate. The 107-residue stretch at Thr172–Tyr278 folds into the Fe2OG dioxygenase domain. Residue Leu177 is modified to (4R)-5-hydroxyleucine; alternate. Leu177 carries the post-translational modification (4R)-5-oxoleucine; alternate. Asn179–Tyr181 is a 2-oxoglutarate binding site. Residues His191 and Asp193 each coordinate Fe cation. Position 194 (Asp194) interacts with substrate. Fe cation is bound at residue His257. 2-oxoglutarate contacts are provided by residues Arg269–Arg275 and Arg275.

The protein belongs to the alkB family. As to quaternary structure, interacts with the ASCC complex composed of ASCC1, ASCC2 and ASCC3. Interacts directly with ASCC3, and is thereby recruited to the ASCC complex. Interacts with OTUD4; the interaction is direct. Interacts with USP7 and USP9X. Fe(2+) is required as a cofactor. Ubiquitinated; undergoes 'Lys-48'-linked polyubiquitination. OTUD4 promotes USP7 and USP9X-dependent deubiquitination of 'Lys-48'-polyubiquitinated ALKBH3 promoting the repair of alkylated DNA lesions. As to expression, ubiquitous. Detected in heart, pancreas, skeletal muscle, thymus, testis, ovary, spleen, prostate, small intestine, peripheral blood leukocytes, urinary bladder and colon.

It is found in the nucleus. It localises to the cytoplasm. It catalyses the reaction an N(1)-methyladenosine in mRNA + 2-oxoglutarate + O2 = an adenosine in mRNA + formaldehyde + succinate + CO2. The enzyme catalyses a methylated nucleobase within DNA + 2-oxoglutarate + O2 = a nucleobase within DNA + formaldehyde + succinate + CO2. It carries out the reaction an N(1)-methyl-2'-deoxyadenosine in single-stranded DNA + 2-oxoglutarate + O2 = a 2'-deoxyadenosine in single-stranded DNA + formaldehyde + succinate + CO2 + H(+). The catalysed reaction is an N(3)-methyl-2'-deoxycytidine in single-stranded DNA + 2-oxoglutarate + O2 = a 2'-deoxycytidine in single-stranded DNA + formaldehyde + succinate + CO2 + H(+). It catalyses the reaction a 3,N(4)-etheno-2'-deoxycytidine in single-stranded DNA + 2-oxoglutarate + O2 + H2O = a 2'-deoxycytidine in single-stranded DNA + glyoxal + succinate + CO2. With respect to regulation, activated by ascorbate. Dioxygenase that mediates demethylation of DNA and RNA containing 1-methyladenosine (m1A). Repairs alkylated DNA containing 1-methyladenosine (m1A) and 3-methylcytosine (m3C) by oxidative demethylation. Has a strong preference for single-stranded DNA. Able to process alkylated m3C within double-stranded regions via its interaction with ASCC3, which promotes DNA unwinding to generate single-stranded substrate needed for ALKBH3. Can repair exocyclic 3,N4-ethenocytosine adducs in single-stranded DNA. Also acts on RNA. Demethylates N(1)-methyladenosine (m1A) RNA, an epigenetic internal modification of messenger RNAs (mRNAs) highly enriched within 5'-untranslated regions (UTRs) and in the vicinity of start codons. Requires molecular oxygen, alpha-ketoglutarate and iron. This is Alpha-ketoglutarate-dependent dioxygenase alkB homolog 3 from Homo sapiens (Human).